Consider the following 248-residue polypeptide: uncharacterized protein (248 aa).

Ser141 lines the substrate pocket. The active-site Proton acceptor is the Tyr154.

It belongs to the short-chain dehydrogenases/reductases (SDR) family.

This is an uncharacterized protein from Methylorubrum extorquens (strain ATCC 14718 / DSM 1338 / JCM 2805 / NCIMB 9133 / AM1) (Methylobacterium extorquens).